Reading from the N-terminus, the 519-residue chain is Importin subunit alpha-9 (519 aa).

Residues 1-29 form a disordered region; that stretch reads MADDGSASNRRDPIKSSVGNVAGQRRRKQ. ARM repeat units lie at residues 116-156, 158-197, 200-239, 244-283, 286-326, 335-374, 377-416, and 429-468; these read FPPV…NIAA, KPEE…NVAG, EDLR…NLIK, KAAA…YLSA, DIAT…NFVA, ILIR…NIAA, IEHK…NLCV, and QEHL…LVLR.

The protein belongs to the importin alpha family. Forms a complex with importin subunit beta-1.

It is found in the nucleus envelope. Binds to conventional NLS motifs and mediates nuclear protein import across the nuclear envelope. Acts as a cellular receptor for the nuclear import of the virD2 protein of Agrobacterium, but is not essential for Agrobacterium-mediated root transformation. This Arabidopsis thaliana (Mouse-ear cress) protein is Importin subunit alpha-9.